Reading from the N-terminus, the 237-residue chain is Octanoyltransferase (237 aa).

The BPL/LPL catalytic domain occupies 27–210 (SGGDDILLLL…EFYHIFQPAG (184 aa)). Residues 72-79 (RGGNVTCH), 139-141 (SLG), and 152-154 (GMA) each bind substrate. Catalysis depends on Cys-170, which acts as the Acyl-thioester intermediate.

This sequence belongs to the LipB family.

The protein localises to the cytoplasm. The catalysed reaction is octanoyl-[ACP] + L-lysyl-[protein] = N(6)-octanoyl-L-lysyl-[protein] + holo-[ACP] + H(+). It functions in the pathway protein modification; protein lipoylation via endogenous pathway; protein N(6)-(lipoyl)lysine from octanoyl-[acyl-carrier-protein]: step 1/2. Its function is as follows. Catalyzes the transfer of endogenously produced octanoic acid from octanoyl-acyl-carrier-protein onto the lipoyl domains of lipoate-dependent enzymes. Lipoyl-ACP can also act as a substrate although octanoyl-ACP is likely to be the physiological substrate. The chain is Octanoyltransferase from Desulfovibrio desulfuricans (strain ATCC 27774 / DSM 6949 / MB).